A 340-amino-acid chain; its full sequence is Probable dual-specificity RNA methyltransferase RlmN (340 aa).

Glutamate 90 functions as the Proton acceptor in the catalytic mechanism. The Radical SAM core domain occupies glutamine 97–asparagine 325. Residues cysteine 104 and cysteine 331 are joined by a disulfide bond. [4Fe-4S] cluster is bound by residues cysteine 111, cysteine 115, and cysteine 118. S-adenosyl-L-methionine-binding positions include glycine 157–glutamate 158, serine 189, serine 212–threonine 214, and asparagine 288. Cysteine 331 serves as the catalytic S-methylcysteine intermediate.

The protein belongs to the radical SAM superfamily. RlmN family. [4Fe-4S] cluster serves as cofactor.

The protein localises to the cytoplasm. The enzyme catalyses adenosine(2503) in 23S rRNA + 2 reduced [2Fe-2S]-[ferredoxin] + 2 S-adenosyl-L-methionine = 2-methyladenosine(2503) in 23S rRNA + 5'-deoxyadenosine + L-methionine + 2 oxidized [2Fe-2S]-[ferredoxin] + S-adenosyl-L-homocysteine. It carries out the reaction adenosine(37) in tRNA + 2 reduced [2Fe-2S]-[ferredoxin] + 2 S-adenosyl-L-methionine = 2-methyladenosine(37) in tRNA + 5'-deoxyadenosine + L-methionine + 2 oxidized [2Fe-2S]-[ferredoxin] + S-adenosyl-L-homocysteine. Functionally, specifically methylates position 2 of adenine 2503 in 23S rRNA and position 2 of adenine 37 in tRNAs. In Treponema pallidum (strain Nichols), this protein is Probable dual-specificity RNA methyltransferase RlmN.